The sequence spans 141 residues: Putative nickel-responsive regulator (141 aa).

Residues histidine 80, histidine 91, histidine 93, and cysteine 99 each coordinate Ni(2+).

Belongs to the transcriptional regulatory CopG/NikR family. Ni(2+) is required as a cofactor.

Transcriptional regulator. This Methanococcus maripaludis (strain DSM 14266 / JCM 13030 / NBRC 101832 / S2 / LL) protein is Putative nickel-responsive regulator.